The chain runs to 175 residues: uncharacterized protein (175 aa).

Residues 107-138 (KTEEEAEKTLQEIERKIFKKLWENLDKERKRE) adopt a coiled-coil conformation.

This is an uncharacterized protein from Aquifex aeolicus (strain VF5).